The sequence spans 157 residues: Alanyl-tRNA editing protein AlaX-S (157 aa).

Zn(2+) is bound by residues H9, H13, C116, and H120.

Belongs to the class-II aminoacyl-tRNA synthetase family. Editing domain AlaX-S subfamily. Monomer and homodimer; the dimer is less active in tRNA editing and does not have a zinc ion associated with it. Another report shows only a monomeric form. Zn(2+) serves as cofactor.

It localises to the cytoplasm. Functions in trans to edit the amino acid moiety from mischarged charged Ser-tRNA(Ala). Has little activity against Gly-tRNA(Ala). In Pyrococcus horikoshii (strain ATCC 700860 / DSM 12428 / JCM 9974 / NBRC 100139 / OT-3), this protein is Alanyl-tRNA editing protein AlaX-S (alaXS).